Consider the following 100-residue polypeptide: Small ribosomal subunit protein uS14 (100 aa).

Belongs to the universal ribosomal protein uS14 family. As to quaternary structure, part of the 30S ribosomal subunit. Contacts proteins S3 and S10.

Binds 16S rRNA, required for the assembly of 30S particles and may also be responsible for determining the conformation of the 16S rRNA at the A site. The polypeptide is Small ribosomal subunit protein uS14 (Prochlorococcus marinus subsp. pastoris (strain CCMP1986 / NIES-2087 / MED4)).